The following is a 398-amino-acid chain: Homeobox protein knotted-1-like 1 (398 aa).

Disordered stretches follow at residues 43–69 (TFHL…PGTH), 172–192 (EFEA…DPEL), and 234–277 (NNNA…PRAE). Gly residues predominate over residues 49–58 (SGGGGGGGSG). The ELK domain maps to 280 to 300 (ELKNHLLRKYSGYLSSLKQEL). The segment at residues 301–364 (SKKKKKGKLP…NQRKRHWKPS (64 aa)) is a DNA-binding region (homeobox; TALE-type).

Belongs to the TALE/KNOX homeobox family. As to expression, expressed only in the stems.

Its subcellular location is the nucleus. Its function is as follows. Probably binds to the DNA sequence 5'-TGAC-3'. In Malus domestica (Apple), this protein is Homeobox protein knotted-1-like 1.